A 104-amino-acid chain; its full sequence is Large ribosomal subunit protein uL24 (104 aa).

It belongs to the universal ribosomal protein uL24 family. As to quaternary structure, part of the 50S ribosomal subunit.

In terms of biological role, one of two assembly initiator proteins, it binds directly to the 5'-end of the 23S rRNA, where it nucleates assembly of the 50S subunit. One of the proteins that surrounds the polypeptide exit tunnel on the outside of the subunit. The protein is Large ribosomal subunit protein uL24 of Methylorubrum populi (strain ATCC BAA-705 / NCIMB 13946 / BJ001) (Methylobacterium populi).